We begin with the raw amino-acid sequence, 91 residues long: MPRSLKKGPFVDHHLLGKVEDAVEAGSRKPIKTWSRRSMIIPEMVGLTIAVYNGKQHVPVMVSEHMVGHKLGEFALTRNYRGHAVDKKAKR.

The protein belongs to the universal ribosomal protein uS19 family.

Its function is as follows. Protein S19 forms a complex with S13 that binds strongly to the 16S ribosomal RNA. The protein is Small ribosomal subunit protein uS19 of Alcanivorax borkumensis (strain ATCC 700651 / DSM 11573 / NCIMB 13689 / SK2).